The sequence spans 155 residues: 3-hydroxyacyl-[acyl-carrier-protein] dehydratase FabZ (155 aa).

The active site involves His-58.

Belongs to the thioester dehydratase family. FabZ subfamily.

It is found in the cytoplasm. The enzyme catalyses a (3R)-hydroxyacyl-[ACP] = a (2E)-enoyl-[ACP] + H2O. Involved in unsaturated fatty acids biosynthesis. Catalyzes the dehydration of short chain beta-hydroxyacyl-ACPs and long chain saturated and unsaturated beta-hydroxyacyl-ACPs. In Rhizobium etli (strain ATCC 51251 / DSM 11541 / JCM 21823 / NBRC 15573 / CFN 42), this protein is 3-hydroxyacyl-[acyl-carrier-protein] dehydratase FabZ.